Here is a 153-residue protein sequence, read N- to C-terminus: Transcriptional repressor NrdR (153 aa).

The segment at 3-34 (CPFCAHDDSQVKDSRPAEDNAAIRRRRQCSKC) is a zinc-finger region. The ATP-cone domain occupies 49–139 (VTVVKSDDKR…VYRDFSEARD (91 aa)).

Belongs to the NrdR family. The cofactor is Zn(2+).

Its function is as follows. Negatively regulates transcription of bacterial ribonucleotide reductase nrd genes and operons by binding to NrdR-boxes. This is Transcriptional repressor NrdR from Erythrobacter litoralis (strain HTCC2594).